The chain runs to 199 residues: Protein-methionine-sulfoxide reductase heme-binding subunit MsrQ (199 aa).

5 helical membrane-spanning segments follow: residues 8-28 (ITWL…WLFW), 82-102 (LWCF…ELGI), 116-136 (PYLT…LTST), 149-169 (FLHN…LWSV), and 171-191 (ILSP…AWRY).

It belongs to the MsrQ family. As to quaternary structure, heterodimer of a catalytic subunit (MsrP) and a heme-binding subunit (MsrQ). FMN is required as a cofactor. It depends on heme b as a cofactor.

The protein localises to the cell inner membrane. In terms of biological role, part of the MsrPQ system that repairs oxidized periplasmic proteins containing methionine sulfoxide residues (Met-O), using respiratory chain electrons. Thus protects these proteins from oxidative-stress damage caused by reactive species of oxygen and chlorine generated by the host defense mechanisms. MsrPQ is essential for the maintenance of envelope integrity under bleach stress, rescuing a wide series of structurally unrelated periplasmic proteins from methionine oxidation. MsrQ provides electrons for reduction to the reductase catalytic subunit MsrP, using the quinone pool of the respiratory chain. This Enterobacter sp. (strain 638) protein is Protein-methionine-sulfoxide reductase heme-binding subunit MsrQ.